Here is a 511-residue protein sequence, read N- to C-terminus: Centrosomal protein CCDC61 (511 aa).

The tract at residues 1-144 is head domain; sequence MEVGTVVQEE…PLPLPYLGKP (144 aa). The stretch at 147–272 forms a coiled coil; it reads AELQKEIRAL…RVKSLTTELA (126 aa). Disordered regions lie at residues 306–403 and 447–486; these read TRVG…SREP and RGRK…SMDT. Positions 315–335 are enriched in basic and acidic residues; the sequence is GSRERIEDRGRRSEERVRRAD. The span at 338 to 352 shows a compositional bias: polar residues; sequence GSRNCITRPSPSPTG. The span at 366-378 shows a compositional bias: basic and acidic residues; that stretch reads DRQRRQKEAELKS.

This sequence belongs to the CCDC61 family. As to quaternary structure, forms homodimers (via head domain).

The protein resides in the cytoplasm. It localises to the cytoskeleton. Its subcellular location is the microtubule organizing center. The protein localises to the centrosome. It is found in the centriolar satellite. The protein resides in the cilium basal body. In terms of biological role, microtubule-binding centrosomal protein required for centriole cohesion, independently of the centrosome-associated protein/CEP250 and rootletin/CROCC linker. In interphase, required for anchoring microtubule at the mother centriole subdistal appendages and for centrosome positioning. During mitosis, may be involved in spindle assembly and chromatin alignment by regulating the organization of spindle microtubules into a symmetrical structure. Plays a non-essential role in ciliogenesis. The protein is Centrosomal protein CCDC61 of Danio rerio (Zebrafish).